Here is a 92-residue protein sequence, read N- to C-terminus: Probable Fe(2+)-trafficking protein (92 aa).

It belongs to the Fe(2+)-trafficking protein family.

Functionally, could be a mediator in iron transactions between iron acquisition and iron-requiring processes, such as synthesis and/or repair of Fe-S clusters in biosynthetic enzymes. The protein is Probable Fe(2+)-trafficking protein of Shewanella frigidimarina (strain NCIMB 400).